We begin with the raw amino-acid sequence, 361 residues long: Probable G-protein coupled receptor 25 (361 aa).

Over 1–39 the chain is Extracellular; sequence MAPTEPWSPSPGSAPWDYSGLDGLEELELCPAGDLPYGY. The chain crosses the membrane as a helical span at residues 40 to 60; the sequence is VYIPALYLAAFAVGLLGNAFV. The Cytoplasmic portion of the chain corresponds to 61-75; it reads VWLLAGRRGPRRLVD. A helical transmembrane segment spans residues 76 to 96; sequence TFVLHLAAADLGFVLTLPLWA. Residues 97-126 lie on the Extracellular side of the membrane; it reads AAAALGGRWPFGDGLCKLSSFALAGTRCAG. The chain crosses the membrane as a helical span at residues 127 to 147; it reads ALLLAGMSVDRYLAVVKLLEA. At 148-155 the chain is on the cytoplasmic side; the sequence is RPLRTPRC. Residues 156–176 form a helical membrane-spanning segment; that stretch reads ALASCCGVWAVALLAGLPSLV. The Extracellular portion of the chain corresponds to 177–200; it reads YRGLQPLPGGQDSQCGEEPSHAFQ. A helical transmembrane segment spans residues 201-220; it reads GLSLLLLLLTFVLPLVVTLF. The Cytoplasmic segment spans residues 221 to 242; the sequence is CYCRISRRLRRPPHVGRARRNS. The chain crosses the membrane as a helical span at residues 243 to 263; it reads LRIIFAIESTFVGSWLPFSAL. Residues 264-289 are Extracellular-facing; it reads RAVFHLARLGALPLPCPLLLALRWGL. Residues 290-310 traverse the membrane as a helical segment; sequence TIATCLAFVNSCANPLIYLLL. The Cytoplasmic segment spans residues 311–361; it reads DRSFRARALDGACGRTGRLARRISSASSLSRDDSSVFRCRAQAANTASASW.

Belongs to the G-protein coupled receptor 1 family.

It is found in the cell membrane. Functionally, orphan receptor. This chain is Probable G-protein coupled receptor 25 (GPR25), found in Homo sapiens (Human).